Here is a 1047-residue protein sequence, read N- to C-terminus: Ribonucleoside-diphosphate reductase subunit alpha (1047 aa).

3 ATP-cone domains span residues 9-111, 118-219, and 237-327; these read CTIV…KAHR, LSVI…ARVR, and FEVL…EALD. Substrate is bound by residues Thr442, 457–458, Gly486, 670–674, and 857–861; these read SC, NLCTE, and PTATI. A disulfide bond links Cys458 and Cys687. Asn670 serves as the catalytic Proton acceptor. The active-site Cysteine radical intermediate is Cys672. Glu674 serves as the catalytic Proton acceptor.

The protein belongs to the ribonucleoside diphosphate reductase large chain family. In terms of assembly, tetramer of two alpha and two beta subunits.

It catalyses the reaction a 2'-deoxyribonucleoside 5'-diphosphate + [thioredoxin]-disulfide + H2O = a ribonucleoside 5'-diphosphate + [thioredoxin]-dithiol. With respect to regulation, under complex allosteric control mediated by deoxynucleoside triphosphates and ATP binding. The type of nucleotide bound at the specificity site determines substrate preference. It seems probable that ATP makes the enzyme reduce CDP and UDP, dGTP favors ADP reduction and dTTP favors GDP reduction. Functionally, provides the precursors necessary for DNA synthesis. Catalyzes the biosynthesis of deoxyribonucleotides from the corresponding ribonucleotides. The polypeptide is Ribonucleoside-diphosphate reductase subunit alpha (nrdA) (Chlamydia muridarum (strain MoPn / Nigg)).